We begin with the raw amino-acid sequence, 378 residues long: Mannitol-1-phosphate 5-dehydrogenase (378 aa).

NAD(+) is bound at residue 4 to 15; sequence SVHFGAGNIGRG.

Belongs to the mannitol dehydrogenase family.

It carries out the reaction D-mannitol 1-phosphate + NAD(+) = beta-D-fructose 6-phosphate + NADH + H(+). The protein is Mannitol-1-phosphate 5-dehydrogenase of Streptococcus pneumoniae (strain Hungary19A-6).